The chain runs to 97 residues: Co-chaperonin GroES (97 aa).

This sequence belongs to the GroES chaperonin family. As to quaternary structure, heptamer of 7 subunits arranged in a ring. Interacts with the chaperonin GroEL.

The protein localises to the cytoplasm. In terms of biological role, together with the chaperonin GroEL, plays an essential role in assisting protein folding. The GroEL-GroES system forms a nano-cage that allows encapsulation of the non-native substrate proteins and provides a physical environment optimized to promote and accelerate protein folding. GroES binds to the apical surface of the GroEL ring, thereby capping the opening of the GroEL channel. The polypeptide is Co-chaperonin GroES (Buchnera aphidicola subsp. Thelaxes suberi).